The following is a 176-amino-acid chain: Interleukin-19 (176 aa).

Positions 1 to 24 (MKTQCASTWLLGMTLILCSVHIYS) are cleaved as a signal peptide. Intrachain disulfides connect cysteine 28–cysteine 120, cysteine 74–cysteine 126, and cysteine 75–cysteine 128. Asparagine 56 carries an N-linked (GlcNAc...) asparagine glycan. N-linked (GlcNAc...) asparagine glycans are attached at residues asparagine 127 and asparagine 134.

Belongs to the IL-10 family.

It is found in the secreted. In terms of biological role, cytokine that functions as an anti-inflammatory and proangiogenic factor. Polarizes adaptive immunity to an anti-inflammatory phenotype through induction of T-helper 2 responses by both down-regulation of IFN-gamma and up-regulation of IL4 and IL5. Produced by osteocytes, stimulates granulopoiesis and neutrophil formation. Exerts its biological effect through a receptor complex consisting of a heterodimer of IL20RA and IL20RB. In turn, activates the Janus kinase (JAK) and signal transducer and activator of transcription (STAT) pathway, and importantly, STAT3. The sequence is that of Interleukin-19 (Il19) from Mus musculus (Mouse).